Reading from the N-terminus, the 116-residue chain is Large ribosomal subunit protein bL17 (116 aa).

This sequence belongs to the bacterial ribosomal protein bL17 family. In terms of assembly, part of the 50S ribosomal subunit. Contacts protein L32.

This is Large ribosomal subunit protein bL17 from Picosynechococcus sp. (strain ATCC 27264 / PCC 7002 / PR-6) (Agmenellum quadruplicatum).